The primary structure comprises 838 residues: Sec1 family domain-containing protein MIP3 (838 aa).

Positions 637–677 are disordered; the sequence is KSEETKEIPSDDQLDIDALDDDPWGKWGDEEEEEVDNSKAD. Residues 646-658 show a composition bias toward acidic residues; sequence SDDQLDIDALDDD.

It belongs to the STXBP/unc-18/SEC1 family. As to quaternary structure, forms a complex with MAG2, ZW10/MIP1 and MIP2 on the endoplasmic reticulum.

Its subcellular location is the endoplasmic reticulum membrane. Functionally, required for proper maturation of seed storage proteins. Forms a complex with MAG2, ZW10/MIP1 and MIP2 on the endoplasmic reticulum that may be responsible for efficient transport of seed storage proteins. This Arabidopsis thaliana (Mouse-ear cress) protein is Sec1 family domain-containing protein MIP3.